Consider the following 209-residue polypeptide: Ribonuclease HII (209 aa).

The region spanning 18–209 (GLVAGVDEVG…FKPVKALLER (192 aa)) is the RNase H type-2 domain. 3 residues coordinate a divalent metal cation: aspartate 24, glutamate 25, and aspartate 116.

It belongs to the RNase HII family. Mn(2+) is required as a cofactor. It depends on Mg(2+) as a cofactor.

The protein localises to the cytoplasm. It carries out the reaction Endonucleolytic cleavage to 5'-phosphomonoester.. Functionally, endonuclease that specifically degrades the RNA of RNA-DNA hybrids. The polypeptide is Ribonuclease HII (Shewanella sp. (strain ANA-3)).